The following is a 700-amino-acid chain: mRNA cap guanine-N(7) methyltransferase (700 aa).

2 stretches are compositionally biased toward basic and acidic residues: residues 1 to 10 (MVYDPIRDCD) and 52 to 67 (EPPRAASVHEDAESHR). 2 disordered regions span residues 1–263 (MVYD…SVLR) and 277–392 (AHAN…ERNK). Positions 113–128 (RSPSMSLSPRSQNQSL) are enriched in polar residues. Composition is skewed to low complexity over residues 129–144 (PYPSSRPGSAAGSAHP) and 220–241 (PQPTTTPSSPSTSQHTPYTPHH). The mRNA cap 0 methyltransferase domain occupies 429–700 (SPIIGLKKFN…LYMGFAFEKM (272 aa)). 438–439 (NN) serves as a coordination point for mRNA. Residues K442, G461, D483, D512, Q538, and Y543 each contribute to the S-adenosyl-L-methionine site.

This sequence belongs to the class I-like SAM-binding methyltransferase superfamily. mRNA cap 0 methyltransferase family.

It localises to the nucleus. It carries out the reaction a 5'-end (5'-triphosphoguanosine)-ribonucleoside in mRNA + S-adenosyl-L-methionine = a 5'-end (N(7)-methyl 5'-triphosphoguanosine)-ribonucleoside in mRNA + S-adenosyl-L-homocysteine. Responsible for methylating the 5'-cap structure of mRNAs. The chain is mRNA cap guanine-N(7) methyltransferase (ABD1) from Cryptococcus neoformans var. neoformans serotype D (strain B-3501A) (Filobasidiella neoformans).